The primary structure comprises 398 residues: Dihydrolipoyllysine-residue acetyltransferase component of acetoin cleaving system (398 aa).

One can recognise a Lipoyl-binding domain in the interval 2–77; the sequence is AVKVVMPKLG…PPGTAICYIG (76 aa). At Lys-43 the chain carries N6-lipoyllysine. The Peripheral subunit-binding (PSBD) domain maps to 118 to 155; that stretch reads KISPVARKIAEKAGLDLKQLKGTGPGGRIVKDDVTKAL. Residues His-371 and Asp-375 contribute to the active site.

This sequence belongs to the 2-oxoacid dehydrogenase family. Requires (R)-lipoate as cofactor.

It catalyses the reaction N(6)-[(R)-dihydrolipoyl]-L-lysyl-[protein] + acetyl-CoA = N(6)-[(R)-S(8)-acetyldihydrolipoyl]-L-lysyl-[protein] + CoA. It functions in the pathway ketone degradation; acetoin degradation. The sequence is that of Dihydrolipoyllysine-residue acetyltransferase component of acetoin cleaving system (acoC) from Bacillus subtilis (strain 168).